We begin with the raw amino-acid sequence, 1320 residues long: Phosphoribosylformylglycinamidine synthase (1320 aa).

Residues Gly-310 to Asp-321 and Ala-686 each bind ATP. Mg(2+) contacts are provided by Asp-687, Glu-726, Asn-730, and Asp-894. An ATP-binding site is contributed by Ser-896. Residues Val-1067 to Gly-1320 form the Glutamine amidotransferase type-1 domain. Cys-1160 serves as the catalytic Nucleophile. Active-site residues include His-1285 and Glu-1287.

In the N-terminal section; belongs to the FGAMS family. As to quaternary structure, monomer.

Its subcellular location is the cytoplasm. It catalyses the reaction N(2)-formyl-N(1)-(5-phospho-beta-D-ribosyl)glycinamide + L-glutamine + ATP + H2O = 2-formamido-N(1)-(5-O-phospho-beta-D-ribosyl)acetamidine + L-glutamate + ADP + phosphate + H(+). It functions in the pathway purine metabolism; IMP biosynthesis via de novo pathway; 5-amino-1-(5-phospho-D-ribosyl)imidazole from N(2)-formyl-N(1)-(5-phospho-D-ribosyl)glycinamide: step 1/2. Phosphoribosylformylglycinamidine synthase involved in the purines biosynthetic pathway. Catalyzes the ATP-dependent conversion of formylglycinamide ribonucleotide (FGAR) and glutamine to yield formylglycinamidine ribonucleotide (FGAM) and glutamate. The protein is Phosphoribosylformylglycinamidine synthase of Colwellia psychrerythraea (strain 34H / ATCC BAA-681) (Vibrio psychroerythus).